A 436-amino-acid polypeptide reads, in one-letter code: DNA primase DnaG (436 aa).

One can recognise a Toprim domain in the interval 169–243 (DSIIVVEGRA…DIDYVARAPY (75 aa)). Residues E175, D217, and D219 each contribute to the Mg(2+) site.

It belongs to the archaeal DnaG primase family. As to quaternary structure, forms a ternary complex with MCM helicase and DNA. Mg(2+) serves as cofactor.

It carries out the reaction ssDNA + n NTP = ssDNA/pppN(pN)n-1 hybrid + (n-1) diphosphate.. Its function is as follows. RNA polymerase that catalyzes the synthesis of short RNA molecules used as primers for DNA polymerase during DNA replication. The protein is DNA primase DnaG of Methanococcus maripaludis (strain DSM 14266 / JCM 13030 / NBRC 101832 / S2 / LL).